Consider the following 862-residue polypeptide: Rab GTPase-binding effector protein 1 (862 aa).

The residue at position 2 (Ala-2) is an N-acetylalanine. Residues 11–345 (DVSLQQRVAE…KKTDTEEEVK (335 aa)) adopt a coiled-coil conformation. The residue at position 282 (Lys-282) is an N6-acetyllysine. The disordered stretch occupies residues 315–374 (ELKKKDQEEDEQQRVNKRKDNKKTDTEEEVKIPVVCALTQEESSTPLSNEEEHLDSTHGS). A compositionally biased stretch (basic and acidic residues) spans 336–345 (KKTDTEEEVK). Ser-374, Ser-377, and Ser-407 each carry phosphoserine. Thr-408 bears the Phosphothreonine mark. Ser-410 bears the Phosphoserine mark. Residues 534 to 816 (DMCSNYEKQL…LQTELDVSEQ (283 aa)) adopt a coiled-coil conformation.

The protein belongs to the rabaptin family. As to quaternary structure, heterodimer with RABGEF1. The heterodimer binds RAB4A and RAB5A that have been activated by GTP-binding. Interacts with TSC2. Interacts with GGA1 (via GAE domain), GGA2 (via GAE domain) and GGA3 (via GAE domain). Interacts with AP1G1 (via GAE domain). Interacts with AP1G2 (via GAE domain). Interacts with ECPAS. Interacts with KCNH1. Interacts with PKD1 (via C-terminal domain) and GGA1; the interactions recruit PKD1:PKD2 complex to GGA1 and ARL3 at trans-Golgi network. Interacts with KCNH1. In terms of processing, proteolytic cleavage by caspases in apoptotic cells causes loss of endosome fusion activity.

It is found in the cytoplasm. It localises to the early endosome. Its subcellular location is the recycling endosome. The protein localises to the cytoplasmic vesicle. In terms of biological role, rab effector protein acting as linker between gamma-adaptin, RAB4A and RAB5A. Involved in endocytic membrane fusion and membrane trafficking of recycling endosomes. Involved in KCNH1 channels trafficking to and from the cell membrane. Stimulates RABGEF1 mediated nucleotide exchange on RAB5A. Mediates the traffic of PKD1:PKD2 complex from the endoplasmic reticulum through the Golgi to the cilium. The chain is Rab GTPase-binding effector protein 1 (Rabep1) from Mus musculus (Mouse).